The sequence spans 485 residues: Aspartyl/glutamyl-tRNA(Asn/Gln) amidotransferase subunit B (485 aa).

It belongs to the GatB/GatE family. GatB subfamily. In terms of assembly, heterotrimer of A, B and C subunits.

It catalyses the reaction L-glutamyl-tRNA(Gln) + L-glutamine + ATP + H2O = L-glutaminyl-tRNA(Gln) + L-glutamate + ADP + phosphate + H(+). It carries out the reaction L-aspartyl-tRNA(Asn) + L-glutamine + ATP + H2O = L-asparaginyl-tRNA(Asn) + L-glutamate + ADP + phosphate + 2 H(+). Functionally, allows the formation of correctly charged Asn-tRNA(Asn) or Gln-tRNA(Gln) through the transamidation of misacylated Asp-tRNA(Asn) or Glu-tRNA(Gln) in organisms which lack either or both of asparaginyl-tRNA or glutaminyl-tRNA synthetases. The reaction takes place in the presence of glutamine and ATP through an activated phospho-Asp-tRNA(Asn) or phospho-Glu-tRNA(Gln). This Ruminiclostridium cellulolyticum (strain ATCC 35319 / DSM 5812 / JCM 6584 / H10) (Clostridium cellulolyticum) protein is Aspartyl/glutamyl-tRNA(Asn/Gln) amidotransferase subunit B.